The following is a 143-amino-acid chain: Deoxyuridine 5'-triphosphate nucleotidohydrolase (143 aa).

The dUMP site is built by S65, V78, R132, and G138.

Belongs to the dUTPase family. In terms of assembly, homotrimer. Mg(2+) serves as cofactor.

It catalyses the reaction dUTP + H2O = dUMP + diphosphate + H(+). Its pathway is pyrimidine metabolism; dUMP biosynthesis; dUMP from dCTP (dUTP route): step 2/2. Its function is as follows. Involved in nucleotide metabolism via production of dUMP, the immediate precursor of thymidine nucleotides, and decreases the intracellular concentration of dUTP so that uracil cannot be incorporated into DNA. This Antonospora locustae (Microsporidian parasite) protein is Deoxyuridine 5'-triphosphate nucleotidohydrolase (DUT1).